We begin with the raw amino-acid sequence, 450 residues long: Glucose-6-phosphate isomerase (450 aa).

Glu290 functions as the Proton donor in the catalytic mechanism. Active-site residues include His311 and Lys425.

Belongs to the GPI family.

The protein resides in the cytoplasm. The catalysed reaction is alpha-D-glucose 6-phosphate = beta-D-fructose 6-phosphate. It functions in the pathway carbohydrate biosynthesis; gluconeogenesis. The protein operates within carbohydrate degradation; glycolysis; D-glyceraldehyde 3-phosphate and glycerone phosphate from D-glucose: step 2/4. Functionally, catalyzes the reversible isomerization of glucose-6-phosphate to fructose-6-phosphate. This Alkaliphilus metalliredigens (strain QYMF) protein is Glucose-6-phosphate isomerase.